The primary structure comprises 379 residues: cAMP-dependent protein kinase type I-alpha regulatory subunit (379 aa).

An N-acetylmethionine modification is found at Met1. The dimerization and phosphorylation stretch occupies residues 1–134 (MASSSTSSEE…ALAKAIEKNV (134 aa)). The tract at residues 63 to 93 (QMVSQQKSSSRSDSREDEVSPPMNPVVKGRR) is disordered. The Pseudophosphorylation motif motif lies at 94–98 (RRGAI). 3',5'-cyclic AMP contacts are provided by residues 135-252 (LFAH…SKVS), Glu200, Arg209, 253-379 (ILES…SLSV), Glu324, and Arg333.

This sequence belongs to the cAMP-dependent kinase regulatory chain family. In terms of assembly, the inactive holoenzyme is composed of two regulatory chains and two catalytic chains. Activation by cAMP releases the two active catalytic monomers and the regulatory dimer. Interacts with PRKACA and PRKACB. Interacts with PRRC1; resulting in PKA activation. In terms of processing, the pseudophosphorylation site binds to the substrate-binding region of the catalytic chain, resulting in the inhibition of its activity.

The protein localises to the cell membrane. Its function is as follows. Regulatory subunit of the cAMP-dependent protein kinases involved in cAMP signaling in cells. The polypeptide is cAMP-dependent protein kinase type I-alpha regulatory subunit (prkar1aa) (Danio rerio (Zebrafish)).